A 620-amino-acid chain; its full sequence is DNA mismatch repair protein MutL (620 aa).

This sequence belongs to the DNA mismatch repair MutL/HexB family.

Its function is as follows. This protein is involved in the repair of mismatches in DNA. It is required for dam-dependent methyl-directed DNA mismatch repair. May act as a 'molecular matchmaker', a protein that promotes the formation of a stable complex between two or more DNA-binding proteins in an ATP-dependent manner without itself being part of a final effector complex. This chain is DNA mismatch repair protein MutL, found in Clostridium tetani (strain Massachusetts / E88).